We begin with the raw amino-acid sequence, 202 residues long: LexA repressor (202 aa).

Positions 28 to 48 form a DNA-binding region, H-T-H motif; it reads RAEIAQRLGFRSPNAAEEHLK. Catalysis depends on for autocatalytic cleavage activity residues Ser119 and Lys156.

Belongs to the peptidase S24 family. Homodimer.

The catalysed reaction is Hydrolysis of Ala-|-Gly bond in repressor LexA.. Represses a number of genes involved in the response to DNA damage (SOS response), including recA and lexA. Binds to the 16 bp palindromic sequence 5'-CTGTATATATATACAG-3'. In the presence of single-stranded DNA, RecA interacts with LexA causing an autocatalytic cleavage which disrupts the DNA-binding part of LexA, leading to derepression of the SOS regulon and eventually DNA repair. The polypeptide is LexA repressor (Enterobacter sp. (strain 638)).